A 506-amino-acid chain; its full sequence is Cytochrome P450 6a8 (506 aa).

Cysteine 451 is a heme binding site.

The protein belongs to the cytochrome P450 family. It depends on heme as a cofactor.

It is found in the endoplasmic reticulum membrane. The protein localises to the microsome membrane. Its function is as follows. Involved in the metabolism of insect hormones and in the breakdown of synthetic insecticides. The polypeptide is Cytochrome P450 6a8 (Cyp6a8) (Drosophila melanogaster (Fruit fly)).